A 142-amino-acid polypeptide reads, in one-letter code: Large ribosomal subunit protein uL11 (142 aa).

This sequence belongs to the universal ribosomal protein uL11 family. Part of the ribosomal stalk of the 50S ribosomal subunit. Interacts with L10 and the large rRNA to form the base of the stalk. L10 forms an elongated spine to which L12 dimers bind in a sequential fashion forming a multimeric L10(L12)X complex. One or more lysine residues are methylated.

Its function is as follows. Forms part of the ribosomal stalk which helps the ribosome interact with GTP-bound translation factors. The polypeptide is Large ribosomal subunit protein uL11 (Pasteurella multocida (strain Pm70)).